Here is a 456-residue protein sequence, read N- to C-terminus: Carnosine N-methyltransferase unmet (456 aa).

Residues R154, G195, E216, D282, F283, and C299 each coordinate S-adenosyl-L-methionine. Carnosine is bound by residues D303, H334, and Y385. The segment covering 402 to 418 (RGKRKASREPHDLIVRE) has biased composition (basic and acidic residues). Residues 402-456 (RGKRKASREPHDLIVREDSEEEGEQQPERNETEEKQQLKPLATANCETEIKEQPS) are disordered. Residues S408 and S420 each carry the phosphoserine modification. The segment covering 427 to 438 (QPERNETEEKQQ) has biased composition (basic and acidic residues).

Belongs to the carnosine N-methyltransferase family. Associates with the GATOR2 complex; the interaction is probably direct and is inhibited by S-adenosyl-L-methionine binding. Associates with the GATOR1 complex; the interaction is probably indirect and mediated by the GATOR2 complex.

It carries out the reaction carnosine + S-adenosyl-L-methionine = anserine + S-adenosyl-L-homocysteine + H(+). Functionally, S-adenosyl-L-methionine-binding protein that acts as a sensor to signal methionine availability to the mTORC1 signaling pathway. Associates with the GATOR2 complex in the absence of methionine to inhibit mTORC1 signaling, but dissociates in the presence of the methionine derivative S-adenosyl-L-methionine; S-adenosyl-L-homocysteine binding does not induce dissociation. Required for mTORC1 pathway response to methionine starvation. Exerts a protective function on developing egg chambers by inhibiting mTORC1 signaling under starvation conditions. May also function as a N-methyltransferase that mediates the formation of anserine (beta-alanyl-N(Pi)-methyl-L-histidine) from carnosine. It is unclear whether this protein has retained N-methyltransferase activity or if it is an evolutionary intermediate whose substrate binding ability has been co-opted to function as a nutrient sensor for mTORC1 signaling. This Drosophila melanogaster (Fruit fly) protein is Carnosine N-methyltransferase unmet.